Reading from the N-terminus, the 364-residue chain is Eukaryotic translation initiation factor 3 subunit H (364 aa).

The region spanning 13–162 is the MPN domain; it reads VQVDALVAIK…LRAYRLSPSF (150 aa).

It belongs to the eIF-3 subunit H family. As to quaternary structure, component of the eukaryotic translation initiation factor 3 (eIF-3) complex.

It localises to the cytoplasm. Component of the eukaryotic translation initiation factor 3 (eIF-3) complex, which is involved in protein synthesis of a specialized repertoire of mRNAs and, together with other initiation factors, stimulates binding of mRNA and methionyl-tRNAi to the 40S ribosome. The eIF-3 complex specifically targets and initiates translation of a subset of mRNAs involved in cell proliferation. This is Eukaryotic translation initiation factor 3 subunit H from Phaeosphaeria nodorum (strain SN15 / ATCC MYA-4574 / FGSC 10173) (Glume blotch fungus).